A 155-amino-acid chain; its full sequence is Small ribosomal subunit protein eS19 (155 aa).

This sequence belongs to the eukaryotic ribosomal protein eS19 family. Component of the small ribosomal subunit.

It localises to the cytoplasm. In terms of biological role, component of the small ribosomal subunit. The ribosome is a large ribonucleoprotein complex responsible for the synthesis of proteins in the cell. Required for proper maturation of the small (40S) ribosomal subunit. The polypeptide is Small ribosomal subunit protein eS19 (RPS19) (Entamoeba histolytica (strain ATCC 30459 / HM-1:IMSS / ABRM)).